We begin with the raw amino-acid sequence, 179 residues long: Inner membrane-spanning protein YciB (179 aa).

The next 5 membrane-spanning stretches (helical) occupy residues 24 to 44 (TATGVLMAATVLQMGIIYAME), 49 to 69 (AMQKATLVLILLFGTLTLVLH), 76 to 96 (WKPTVLYGAMAIALAVALWAL), 121 to 141 (VAWIGYCLFMAAINGYVAAYF), and 151 to 171 (LWGYVFPIVFLVAQGLYISPH).

The protein belongs to the YciB family.

Its subcellular location is the cell inner membrane. In terms of biological role, plays a role in cell envelope biogenesis, maintenance of cell envelope integrity and membrane homeostasis. This is Inner membrane-spanning protein YciB from Variovorax paradoxus (strain S110).